The sequence spans 228 residues: Cytochrome b6-f complex iron-sulfur subunit 2, chloroplastic (228 aa).

The N-terminal 49 residues, 1 to 49 (MASSTLSPVTQLCSSKSGLSSVSQCLLLKPMKINSHGLGKDKRMKVKCM), are a transit peptide targeting the chloroplast. A helical membrane pass occupies residues 71–91 (LLLGALSLPTAGMLVPYATFF). The region spanning 115 to 211 (ASEWLKTHPP…ADIDDGKVVF (97 aa)) is the Rieske domain. [2Fe-2S] cluster contacts are provided by C157, H159, C175, and H178. The cysteines at positions 162 and 177 are disulfide-linked.

This sequence belongs to the Rieske iron-sulfur protein family. The 4 large subunits of the cytochrome b6-f complex are cytochrome b6, subunit IV (17 kDa polypeptide, petD), cytochrome f and the Rieske protein, while the 4 small subunits are petG, petL, petM and petN. The complex functions as a dimer. [2Fe-2S] cluster serves as cofactor.

It localises to the plastid. The protein localises to the chloroplast thylakoid membrane. It carries out the reaction 2 oxidized [plastocyanin] + a plastoquinol + 2 H(+)(in) = 2 reduced [plastocyanin] + a plastoquinone + 4 H(+)(out). Its function is as follows. Component of the cytochrome b6-f complex, which mediates electron transfer between photosystem II (PSII) and photosystem I (PSI), cyclic electron flow around PSI, and state transitions. This is Cytochrome b6-f complex iron-sulfur subunit 2, chloroplastic (petC2) from Nicotiana tabacum (Common tobacco).